An 830-amino-acid chain; its full sequence is Venom phosphodiesterase (830 aa).

2 SMB domains span residues 7–50 (PLES…VLPT) and 51–95 (QSWS…RETS). Disulfide bonds link C11–C15, C11–C28, C15–C46, C26–C28, C26–C39, C32–C38, C39–C46, C55–C60, C55–C72, C60–C90, C70–C72, C70–C83, C76–C82, C83–C90, C101–C147, and C109–C321. N16 is a glycosylation site (N-linked (GlcNAc...) asparagine). A Cell attachment site motif is present at residues 35-37 (RKA). The a divalent metal cation site is built by D124 and T162. The active-site AMP-threonine intermediate is T162. 3 N-linked (GlcNAc...) asparagine glycosylation sites follow: N193, N236, and N247. An AMP-binding site is contributed by K248. Residues D282, H286, D329, and H330 each coordinate a divalent metal cation. H286 serves as a coordination point for AMP. 6 disulfides stabilise this stretch: C337–C434, C385–C772, C518–C575, C531–C632, C533–C617, and C740–C750. H439 contacts a divalent metal cation. A glycan (N-linked (GlcNAc...) asparagine) is linked at N489. 2 N-linked (GlcNAc...) asparagine glycosylation sites follow: N723 and N742.

This sequence belongs to the nucleotide pyrophosphatase/phosphodiesterase family. In terms of assembly, monomer cleaved in two subunits; disulfide-linked. Is synthesized as a single-chain protein and is subsequently cleaved to form a two-subunit protein held together with disulfide bonds. The cofactor is a divalent metal cation. Expressed by venom gland.

It is found in the secreted. It carries out the reaction ADP + H2O = AMP + phosphate + H(+). Functionally, hydrolyzes ADP with high activity. Shows weak or no activity on 5'-AMP, 5'-GMP, 3'-AMP, ATP, cAMP, and cGMP. Is devoid of monophosphatase and proteinase activities. Dose-dependently inhibits platelet aggregation induced by ADP and collagen. This Naja atra (Chinese cobra) protein is Venom phosphodiesterase.